The chain runs to 222 residues: Deoxyribose-phosphate aldolase (222 aa).

Residue Asp-89 is the Proton donor/acceptor of the active site. Lys-152 functions as the Schiff-base intermediate with acetaldehyde in the catalytic mechanism. Lys-181 acts as the Proton donor/acceptor in catalysis.

Belongs to the DeoC/FbaB aldolase family. DeoC type 1 subfamily.

It is found in the cytoplasm. It catalyses the reaction 2-deoxy-D-ribose 5-phosphate = D-glyceraldehyde 3-phosphate + acetaldehyde. The protein operates within carbohydrate degradation; 2-deoxy-D-ribose 1-phosphate degradation; D-glyceraldehyde 3-phosphate and acetaldehyde from 2-deoxy-alpha-D-ribose 1-phosphate: step 2/2. Its function is as follows. Catalyzes a reversible aldol reaction between acetaldehyde and D-glyceraldehyde 3-phosphate to generate 2-deoxy-D-ribose 5-phosphate. The polypeptide is Deoxyribose-phosphate aldolase (Clostridium novyi (strain NT)).